A 294-amino-acid polypeptide reads, in one-letter code: Probable porphobilinogen deaminase (294 aa).

Residue Cys233 is modified to S-(dipyrrolylmethanemethyl)cysteine.

The protein belongs to the HMBS family. Requires dipyrromethane as cofactor.

The catalysed reaction is 4 porphobilinogen + H2O = hydroxymethylbilane + 4 NH4(+). It participates in porphyrin-containing compound metabolism; protoporphyrin-IX biosynthesis; coproporphyrinogen-III from 5-aminolevulinate: step 2/4. Its function is as follows. Tetrapolymerization of the monopyrrole PBG into the hydroxymethylbilane pre-uroporphyrinogen in several discrete steps. This chain is Probable porphobilinogen deaminase, found in Sulfurisphaera tokodaii (strain DSM 16993 / JCM 10545 / NBRC 100140 / 7) (Sulfolobus tokodaii).